We begin with the raw amino-acid sequence, 169 residues long: Myosin regulatory light chain 11 (169 aa).

A2 is subject to N,N,N-trimethylalanine. Phosphoserine is present on residues S15 and S16. Phosphothreonine is present on residues T25 and T35. In terms of domain architecture, EF-hand 1 spans 25–60 (TQIQEFKEAFTVIDQNRDGIIDKEDLRDTFAAMGRL). Ca(2+) contacts are provided by D38, N40, D42, and D49. The residue at position 75 (S75) is a Phosphoserine. 2 consecutive EF-hand domains span residues 95–130 (DPED…QCDR) and 131–166 (FSQE…GDAK). Residue T101 is modified to Phosphothreonine.

Myosin is a hexamer of 2 heavy chains and 4 light chains. Expressed in fetal and adult skeletal muscle.

Functionally, myosin regulatory subunit that plays an essential role to maintain muscle integrity during early development. Plays a role in muscle contraction. The polypeptide is Myosin regulatory light chain 11 (Homo sapiens (Human)).